We begin with the raw amino-acid sequence, 73 residues long: Beta-defensin 10 (73 aa).

Positions 1–23 are cleaved as a signal peptide; sequence MRTLCSLLLICCLLFSYTTPAVG. 3 disulfides stabilise this stretch: Cys37–Cys66, Cys44–Cys59, and Cys49–Cys67.

Belongs to the beta-defensin family. Expressed in both adult and neonate brain, and very weakly in kidneys, epididymis, and testis.

It localises to the secreted. In terms of biological role, has antibacterial activity. This is Beta-defensin 10 (Defb10) from Mus musculus (Mouse).